Reading from the N-terminus, the 186-residue chain is Ribosome-recycling factor (186 aa).

Belongs to the RRF family.

Its subcellular location is the cytoplasm. In terms of biological role, responsible for the release of ribosomes from messenger RNA at the termination of protein biosynthesis. May increase the efficiency of translation by recycling ribosomes from one round of translation to another. In Rhizobium leguminosarum bv. trifolii (strain WSM2304), this protein is Ribosome-recycling factor.